The following is a 149-amino-acid chain: Large ribosomal subunit protein bL9 (149 aa).

Belongs to the bacterial ribosomal protein bL9 family.

In terms of biological role, binds to the 23S rRNA. This chain is Large ribosomal subunit protein bL9, found in Geobacillus sp. (strain WCH70).